Here is a 129-residue protein sequence, read N- to C-terminus: Lysozyme C (129 aa).

A C-type lysozyme domain is found at 1–129 (KVYGRCELAA…VQAWIRGCRL (129 aa)). 4 disulfides stabilise this stretch: C6–C127, C30–C115, C64–C80, and C76–C94. Catalysis depends on residues E35 and D52.

The protein belongs to the glycosyl hydrolase 22 family. As to quaternary structure, monomer.

Its subcellular location is the secreted. It catalyses the reaction Hydrolysis of (1-&gt;4)-beta-linkages between N-acetylmuramic acid and N-acetyl-D-glucosamine residues in a peptidoglycan and between N-acetyl-D-glucosamine residues in chitodextrins.. Its function is as follows. Lysozymes have primarily a bacteriolytic function; those in tissues and body fluids are associated with the monocyte-macrophage system and enhance the activity of immunoagents. This chain is Lysozyme C (LYZ), found in Tragopan satyra (Satyr tragopan).